Reading from the N-terminus, the 180-residue chain is Adenine phosphoribosyltransferase (180 aa).

It belongs to the purine/pyrimidine phosphoribosyltransferase family. As to quaternary structure, homodimer.

It is found in the cytoplasm. It carries out the reaction AMP + diphosphate = 5-phospho-alpha-D-ribose 1-diphosphate + adenine. The protein operates within purine metabolism; AMP biosynthesis via salvage pathway; AMP from adenine: step 1/1. Functionally, catalyzes a salvage reaction resulting in the formation of AMP, that is energically less costly than de novo synthesis. The sequence is that of Adenine phosphoribosyltransferase from Butyrivibrio fibrisolvens.